The sequence spans 1083 residues: UPF0182 protein BAD_0641 (1083 aa).

The disordered stretch occupies residues 1 to 72 (MSFFDMFGPM…TSKPNRPRKP (72 aa)). 7 consecutive transmembrane segments (helical) span residues 78–98 (IFIGVVLALAIVIGLFFALAQ), 125–145 (LWLAYAVLIAAVGFISATLAI), 178–198 (IAVVISLIVGLVFGSQFNANW), 239–259 (SLLLLAGIIFSIVTHVLMGGI), 281–301 (IGIWLMLNMFAWAANQVLGVF), 325–345 (VTFIMAAITAILGVILGLWIM), and 372–392 (VAIASAIVVSLVLTVAWPVLL). The disordered stretch occupies residues 976-1061 (DSGASAGDAE…SDAAMKKGDW (86 aa)). 2 stretches are compositionally biased toward basic and acidic residues: residues 991-1013 (TDDKQDAKNDDSADGKTNTDGKQ) and 1050-1060 (KDSDAAMKKGD).

This sequence belongs to the UPF0182 family.

It is found in the cell membrane. This is UPF0182 protein BAD_0641 from Bifidobacterium adolescentis (strain ATCC 15703 / DSM 20083 / NCTC 11814 / E194a).